Here is a 432-residue protein sequence, read N- to C-terminus: MEKITLAPISAVEGTINLPGSKSLSNRALLLAALAKGTTKVTNLLDSDDIRHMLNALKALGVRYQLSDDKTICEIEGLGGAFNIQNNLSLFLGNAGTAMRPLTAALCLKGKTESEIILTGEPRMKERPILHLVDALRQAGADIRYLENEGYPPLAIRNKGIKGGKVKIDGSISSQFLTALLMSTPLAENDTEIEIIGELVSKPYIDITLAMMRDFGVKVENHHYQKFQVKGNQSYISPNKYLVEGDASSASYFLAAGAIKGKVKVTGIGKNSIQGDRLFADVLEKMGAKITWGEDFIQAEYAELNGIDMDMNHIPDAAMTIATTALFANGETVIRNIYNWRVKETDRLTAMATELRKIGAEVEEGEDFIRIQPLPLNQFKHANIETYNDHRMAMCFSLIALSNTPVTILDPKCTAKTFPTFFNEFEKICLKN.

3-phosphoshikimate contacts are provided by K22, S23, and R27. K22 contributes to the phosphoenolpyruvate binding site. Phosphoenolpyruvate is bound by residues G96 and R127. The 3-phosphoshikimate site is built by S173, S174, Q175, S201, D316, N339, and K343. Q175 is a binding site for phosphoenolpyruvate. D316 serves as the catalytic Proton acceptor. Positions 347, 391, and 416 each coordinate phosphoenolpyruvate.

Belongs to the EPSP synthase family. As to quaternary structure, monomer.

It is found in the cytoplasm. It carries out the reaction 3-phosphoshikimate + phosphoenolpyruvate = 5-O-(1-carboxyvinyl)-3-phosphoshikimate + phosphate. It functions in the pathway metabolic intermediate biosynthesis; chorismate biosynthesis; chorismate from D-erythrose 4-phosphate and phosphoenolpyruvate: step 6/7. Catalyzes the transfer of the enolpyruvyl moiety of phosphoenolpyruvate (PEP) to the 5-hydroxyl of shikimate-3-phosphate (S3P) to produce enolpyruvyl shikimate-3-phosphate and inorganic phosphate. The sequence is that of 3-phosphoshikimate 1-carboxyvinyltransferase from Haemophilus influenzae (strain PittGG).